We begin with the raw amino-acid sequence, 618 residues long: COMPASS component cclA (618 aa).

The tract at residues 1-91 (MSSIQPVGSS…KKAAVAPNSA (91 aa)) is disordered. Composition is skewed to low complexity over residues 8–19 (GSSGPSSNINSP) and 37–49 (NARS…SNAS). A compositionally biased stretch (basic residues) spans 57–69 (SKRNKRDSRKKRE). A B30.2/SPRY domain is found at 157-368 (IADPGFPHIK…QSNVFSTKHL (212 aa)). Residues 588 to 618 (TLSVGHEGSPNPATPSAPLENTVPTEDVEMS) form a disordered region.

Belongs to the cclA family. As to quaternary structure, component of the COMPASS complex.

The protein resides in the nucleus. It is found in the chromosome. It localises to the telomere. Functionally, component of the COMPASS (Set1C) complex that specifically mono-, di- and trimethylates histone H3 to form H3K4me1/2/3, which subsequently plays a role in telomere length maintenance and transcription elongation regulation. Controls the production of several secondary metabolites, including gliotoxin, but does not contribute to pathogenicity. The protein is COMPASS component cclA of Aspergillus fumigatus (strain ATCC MYA-4609 / CBS 101355 / FGSC A1100 / Af293) (Neosartorya fumigata).